The following is a 214-amino-acid chain: tRNA (guanine-N(7)-)-methyltransferase (214 aa).

D35, E60, N87, and D113 together coordinate S-adenosyl-L-methionine. D113 is a catalytic residue. Residues K117 and D149 each coordinate substrate.

This sequence belongs to the class I-like SAM-binding methyltransferase superfamily. TrmB family.

It carries out the reaction guanosine(46) in tRNA + S-adenosyl-L-methionine = N(7)-methylguanosine(46) in tRNA + S-adenosyl-L-homocysteine. It functions in the pathway tRNA modification; N(7)-methylguanine-tRNA biosynthesis. Functionally, catalyzes the formation of N(7)-methylguanine at position 46 (m7G46) in tRNA. The protein is tRNA (guanine-N(7)-)-methyltransferase of Prochlorococcus marinus (strain NATL2A).